The following is a 312-amino-acid chain: Glyoxylate/hydroxypyruvate reductase A (312 aa).

Arg227 is an active-site residue. Catalysis depends on His275, which acts as the Proton donor.

The protein belongs to the D-isomer specific 2-hydroxyacid dehydrogenase family. GhrA subfamily.

It localises to the cytoplasm. The enzyme catalyses glycolate + NADP(+) = glyoxylate + NADPH + H(+). The catalysed reaction is (R)-glycerate + NAD(+) = 3-hydroxypyruvate + NADH + H(+). It carries out the reaction (R)-glycerate + NADP(+) = 3-hydroxypyruvate + NADPH + H(+). Catalyzes the NADPH-dependent reduction of glyoxylate and hydroxypyruvate into glycolate and glycerate, respectively. This is Glyoxylate/hydroxypyruvate reductase A from Escherichia coli O127:H6 (strain E2348/69 / EPEC).